The chain runs to 84 residues: Cell division topological specificity factor (84 aa).

This sequence belongs to the MinE family.

Its function is as follows. Prevents the cell division inhibition by proteins MinC and MinD at internal division sites while permitting inhibition at polar sites. This ensures cell division at the proper site by restricting the formation of a division septum at the midpoint of the long axis of the cell. The polypeptide is Cell division topological specificity factor (Azotobacter vinelandii (strain DJ / ATCC BAA-1303)).